Here is a 583-residue protein sequence, read N- to C-terminus: Extracellular serine/threonine protein kinase four-jointed (583 aa).

At 1-78 the chain is on the cytoplasmic side; sequence MYDIKRLEAG…RRRSLQRRAC (78 aa). The chain crosses the membrane as a helical; Signal-anchor for type II membrane protein span at residues 79-99; the sequence is LLSILAAFVFGMALGVVVPMF. At 100 to 583 the chain is on the extracellular side; the sequence is GLPRHQDSPP…LGQVQKCQGS (484 aa). A disordered region spans residues 179-222; it reads RTASGRYRKGPERRLSKKMPERVQPQETSRSPTTSPTNPTSEHQ. The segment covering 187–199 has biased composition (basic and acidic residues); that stretch reads KGPERRLSKKMPE. Over residues 206–219 the composition is skewed to low complexity; the sequence is TSRSPTTSPTNPTS. N-linked (GlcNAc...) asparagine glycosylation is found at asparagine 310 and asparagine 379. Residues 384-421 form a disordered region; that stretch reads MQSERQAQSQPHGLLKRLGAASSPGSAHQSNAIEETGT. A glycan (N-linked (GlcNAc...) asparagine) is linked at asparagine 491.

This sequence belongs to the FJX1/FJ family. Post-translationally, proteolytically cleaved to yield a secreted protein. In the eye disk, expressed in a gradient ahead of the morphogenetic furrow, high at the equator and low at the poles of the eye. In the leg disk, expressed in concentric rings, possibly corresponding to segmental boundaries. In the wing disk, expression is localized in the wing pouch; low in peripheral regions and high towards the center.

It localises to the golgi apparatus membrane. Its subcellular location is the secreted. It catalyses the reaction L-seryl-[protein] + ATP = O-phospho-L-seryl-[protein] + ADP + H(+). The enzyme catalyses L-threonyl-[protein] + ATP = O-phospho-L-threonyl-[protein] + ADP + H(+). In terms of biological role, golgi serine/threonine protein kinase required for intermediate growth in the proximal-distal axis. Phosphorylates specific residues within extracellular cadherin domains of Fat (ft) and Dachsous (ds) as they transit through the Golgi. Acts in ommatidial polarity determination as a secondary signal downstream of Notch, JAK/STAT and wingless. Also necessary for the initiation, up-regulation or maintenance of Notch ligand, Serrate (Ser) expression in legs, thereby participating in a feedback loop with N signaling. Sufficient for joint formation and growth in the leg. The protein is Extracellular serine/threonine protein kinase four-jointed of Drosophila melanogaster (Fruit fly).